A 351-amino-acid polypeptide reads, in one-letter code: Aromatic amino acid aminotransferase (351 aa).

N6-(pyridoxal phosphate)lysine is present on lysine 215.

Belongs to the class-II pyridoxal-phosphate-dependent aminotransferase family. In terms of assembly, homodimer. The cofactor is pyridoxal 5'-phosphate.

The catalysed reaction is an aromatic L-alpha-amino acid + 2-oxoglutarate = an aromatic oxo-acid + L-glutamate. Aminotransferase that catalyzes the conversion of aromatic amino acids and 2-oxoglutarate into corresponding aromatic oxo acids and L-glutamate. This Mycolicibacterium vanbaalenii (strain DSM 7251 / JCM 13017 / BCRC 16820 / KCTC 9966 / NRRL B-24157 / PYR-1) (Mycobacterium vanbaalenii) protein is Aromatic amino acid aminotransferase.